The primary structure comprises 113 residues: MTKINENVAIQFVKGENEKDQPEIRLFRNLDGKKGKAVYKFYKPKTITLTNYKSVQRMFLIDSEGVLSTKKIDLSISEDHVKEVKSTYNWNSEEEFERFMRFASRYANSLSQN.

The protein belongs to the Psb28 family. In terms of assembly, part of the photosystem II complex.

The protein resides in the cellular thylakoid membrane. This Prochlorococcus marinus (strain NATL2A) protein is Photosystem II reaction center Psb28 protein.